The chain runs to 688 residues: Nucleolar protein 10 (688 aa).

An N-acetylmethionine modification is found at Met1. Residue Ser25 is modified to Phosphoserine. 7 WD repeats span residues 44–82, 88–124, 127–163, 170–205, 219–258, 262–300, and 304–341; these read ELIQ…CYDT, KFER…FHSQ, FYYK…RLNL, NPLQ…CWDP, NSVT…LYDL, KPLL…MWNK, and KIFT…IYYI. Positions 423–446 form a coiled coil; that stretch reads EYRKDKIRQKIEETRAQRVQLKKL. A Phosphoserine modification is found at Ser475. Thr481 is subject to Phosphothreonine. Phosphoserine is present on Ser514. Coiled-coil stretches lie at residues 514–589 and 640–673; these read SEKR…TVLK and SKQL…LRRS. Disordered stretches follow at residues 529–557 and 645–688; these read LREK…EKAW and FTLK…RSFH. Residues 648–663 show a composition bias toward basic and acidic residues; sequence KRSEQQKKQQEAEKLH. Over residues 664 to 688 the composition is skewed to basic residues; that stretch reads RQERKRLRRSAGHLKSRHKRGRSFH.

This sequence belongs to the WD repeat NOL10/ENP2 family.

The protein localises to the nucleus. It is found in the nucleolus. The protein is Nucleolar protein 10 (NOL10) of Homo sapiens (Human).